The primary structure comprises 1284 residues: Collagen alpha-1(XX) chain (1284 aa).

A signal peptide spans 1–22 (MSSGDPAHLGLCLWLWLGATLG). The region spanning 28–119 (ASGLLRLAVL…EFVIEDLKSS (92 aa)) is the Fibronectin type-III 1 domain. Positions 122 to 171 (DRSSQRPLGSGAPEPTPSHTGSPDPEQASEPQVAFTPSQDPRTPAGPQFR) are disordered. A VWFA domain is found at 179–354 (DMVFLVDGSW…GALAGLLSRL (176 aa)). Fibronectin type-III domains follow at residues 379–468 (APTS…APLP), 469–559 (PPRA…TLAP), 560–647 (PRHL…TKKA), 649–738 (SPSQ…TPST), and 743–833 (PPSN…ACPA). Asparagine 607 is a glycosylation site (N-linked (GlcNAc...) asparagine). The Laminin G-like domain occupies 842-1037 (GFDLMVAFSL…LQMLQIVCSD (196 aa)). 2 disordered regions span residues 1065–1190 (SCSS…EKGE) and 1212–1284 (SFHE…GLWE). Positions 1071-1082 (PGPPGPQGPPGL) are enriched in pro residues. 2 Collagen-like domains span residues 1071–1127 (PGPP…IPGR) and 1133–1190 (PKGM…EKGE). Composition is skewed to low complexity over residues 1112-1125 (LPGL…QGIP) and 1166-1181 (ERGP…LPGP). Residues 1271-1284 (SPGQQGASTQGLWE) show a composition bias toward polar residues.

High expression in heart, lung, liver, skeletal muscle, kidney, pancreas, spleen, testis, ovary, subthalamic nucleus and fetal liver. Weak expression in other tissues tested.

The protein resides in the secreted. It is found in the extracellular space. Its function is as follows. Probable collagen protein. The chain is Collagen alpha-1(XX) chain (COL20A1) from Homo sapiens (Human).